Reading from the N-terminus, the 353-residue chain is 3-isopropylmalate dehydrogenase (353 aa).

An NAD(+)-binding site is contributed by 76–89; the sequence is GPKWDDPRAKVRPE. Substrate contacts are provided by Arg-96, Arg-106, Arg-134, and Asp-223. Asp-223, Asp-247, and Asp-251 together coordinate Mg(2+). Residue 281-293 participates in NAD(+) binding; sequence GSAPDIAGKGIAN.

It belongs to the isocitrate and isopropylmalate dehydrogenases family. LeuB type 1 subfamily. Homodimer. It depends on Mg(2+) as a cofactor. Mn(2+) is required as a cofactor.

It is found in the cytoplasm. The catalysed reaction is (2R,3S)-3-isopropylmalate + NAD(+) = 4-methyl-2-oxopentanoate + CO2 + NADH. The protein operates within amino-acid biosynthesis; L-leucine biosynthesis; L-leucine from 3-methyl-2-oxobutanoate: step 3/4. Its function is as follows. Catalyzes the oxidation of 3-carboxy-2-hydroxy-4-methylpentanoate (3-isopropylmalate) to 3-carboxy-4-methyl-2-oxopentanoate. The product decarboxylates to 4-methyl-2 oxopentanoate. This chain is 3-isopropylmalate dehydrogenase, found in Anaeromyxobacter dehalogenans (strain 2CP-C).